We begin with the raw amino-acid sequence, 688 residues long: Coiled-coil domain-containing protein 157 (688 aa).

The span at Ala143 to Pro153 shows a compositional bias: polar residues. Disordered regions lie at residues Ala143 to Ser162, Ala168 to Ser189, Gln322 to Arg341, Gln366 to Ala385, and Gln592 to Thr688. Positions Lys288–Gln572 form a coiled coil. The segment covering Glu369–Gln382 has biased composition (polar residues). The segment covering Ser671–Ala680 has biased composition (low complexity).

The sequence is that of Coiled-coil domain-containing protein 157 (CCDC157) from Bos taurus (Bovine).